Consider the following 318-residue polypeptide: Oncosphere antigen A (318 aa).

Fibronectin type-III domains lie at 6–103, 109–207, and 211–308; these read IPQN…TPLP, KPSF…ISRA, and VPQN…TPSV.

The protein is Oncosphere antigen A (ONCA) of Hydatigena taeniaeformis (Feline tapeworm).